Reading from the N-terminus, the 209-residue chain is Mitotic spindle checkpoint protein MAD2 (209 aa).

The HORMA domain occupies 15 to 198 (HGSAAIVSEF…TKIHKVDTLV (184 aa)).

It belongs to the MAD2 family. As to quaternary structure, part of the mitotic checkpoint complex (MCC); interacts with MAD1, CDC20-1, CDC20-2 and CDC20-5. Interacts with BUBR1 at chromocenters and with BUB3.1. Interacts with EIF4B3. Expressed in actively dividing tissues, early in organ development, in young leaves, lateral root primordia and root meristems.

Its subcellular location is the nucleus. The protein resides in the nucleus envelope. It localises to the chromosome. The protein localises to the centromere. It is found in the kinetochore. Its subcellular location is the cytoplasm. The protein resides in the cytoskeleton. It localises to the spindle. Its function is as follows. Required for the execution of the mitotic checkpoint which monitors the process of kinetochore-spindle attachment and delays the onset of anaphase when this process is not complete. It inhibits the activity of the anaphase promoting complex by sequestering CDC20 until all chromosomes are aligned at the metaphase plate. This chain is Mitotic spindle checkpoint protein MAD2, found in Arabidopsis thaliana (Mouse-ear cress).